A 400-amino-acid chain; its full sequence is MGAKTEFRSSEPITDSERSQINSVRAMLQEKLPDGIPDDVNTDLNLCRWIRGYHGDTEKLVKNFATYLASRKAAGFVGNDFAEKFFELPSIAPFLQFIASSRLQDRQWSDEHNAFLFVERAWSQPKEFIKTFKTSDYLLHCFGYSEMLQQLILRREKKQSADKGPVQFIVIFDLNTVNITDYVNPMSGYMKLWQIRSELWQDWFPEMVQRIYLTNPPRLLGLLWKVARVFLSEENLKRIEIISDKSDLAGKFLPPWLVPKEYGGEFVNTVPPGDETGVSVRRKITSADYYKPYQHYKEHGIDRPKSSHKDVSPAEKFVFKIQVPNGKKLLWDFTASGELQFAIFRGNNRNDLVFPSLHLITNKLNEEGSLDNVSDSEISFEFQNLSGYFTLKLEYTVAII.

Residues 87–270 (ELPSIAPFLQ…EYGGEFVNTV (184 aa)) enclose the CRAL-TRIO domain. The GOLD domain maps to 304–399 (PKSSHKDVSP…TLKLEYTVAI (96 aa)).

This is CRAL-TRIO domain-containing protein C34C12.6 from Caenorhabditis elegans.